A 136-amino-acid polypeptide reads, in one-letter code: Cancer/testis antigen 62 (136 aa).

Residues 1–22 (MMHTTSYRRLSPPHLTDQPSAY) are disordered.

As to expression, testis specific. Expressed in cancer cell lines.

This is Cancer/testis antigen 62 (CT62) from Homo sapiens (Human).